The sequence spans 346 residues: Phospholipase A1 (346 aa).

A signal peptide spans 1–26 (MRKFAAIFVVFFVQCTHLYSLAQARA). Positions 27–37 (EPDPGVVEYLK) are excised as a propeptide. N-linked (GlcNAc...) asparagine glycans are attached at residues N44 and N72. S167 serves as the catalytic Nucleophile. Residue N185 is glycosylated (N-linked (GlcNAc...) asparagine). Catalysis depends on charge relay system residues D195 and H258.

Belongs to the AB hydrolase superfamily. Lipase family. Post-translationally, contains six disulfide bonds. In terms of processing, N-glycosylated; contains mannose. Expressed by the venom gland.

The protein resides in the secreted. The catalysed reaction is a 1,2-diacyl-sn-glycero-3-phosphocholine + H2O = a 2-acyl-sn-glycero-3-phosphocholine + a fatty acid + H(+). In terms of biological role, catalyzes the hydrolysis of phosphatidylcholine with phospholipase A1 activity. Induces hemolytic activity. Acts as an allergen. In Solenopsis invicta (Red imported fire ant), this protein is Phospholipase A1.